The sequence spans 662 residues: MEPLVTWVVPLLFLFLLSRQGAACRTSECCFQDPPYPDADSGSASGPRDLRCYRISSDRYECSWQYEGPTAGVSHFLRCCLSSGRCCYFAAGSATRLQFSDQAGVSVLYTVTLWVESWARNQTEKSPEVTLQLYNSVKYEPPLGDIKVSKLAGQLRMEWETPDNQVGAEVQFRHRTPSSPWKLGDCGPQDDDTESCLCPLEMNVAQEFQLRRRQLGSQGSSWSKWSSPVCVPPENPPQPQVRFSVEQLGQDGRRRLTLKEQPTQLELPEGCQGLAPGTEVTYRLQLHMLSCPCKAKATRTLHLGKMPYLSGAAYNVAVISSNQFGPGLNQTWHIPADTHTEPVALNISVGTNGTTMYWPARAQSMTYCIEWQPVGQDGGLATCSLTAPQDPDPAGMATYSWSRESGAMGQEKCYYITIFASAHPEKLTLWSTVLSTYHFGGNASAAGTPHHVSVKNHSLDSVSVDWAPSLLSTCPGVLKEYVVRCRDEDSKQVSEHPVQPTETQVTLSGLRAGVAYTVQVRADTAWLRGVWSQPQRFSIEVQVSDWLIFFASLGSFLSILLVGVLGYLGLNRAARHLCPPLPTPCASSAIEFPGGKETWQWINPVDFQEEASLQEALVVEMSWDKGERTEPLEKTELPEGAPELALDTELSLEDGDRCKAKM.

A signal peptide spans 1–23; that stretch reads MEPLVTWVVPLLFLFLLSRQGAA. The Extracellular portion of the chain corresponds to 24-545; that stretch reads CRTSECCFQD…RFSIEVQVSD (522 aa). 5 consecutive Fibronectin type-III domains span residues 46–136, 142–234, 237–337, 338–444, and 448–542; these read GPRD…LYNS, PLGD…VPPE, PQPQ…IPAD, THTE…GNAS, and TPHH…IEVQ. Cys52 and Cys62 form a disulfide bridge. An N-linked (GlcNAc...) asparagine glycan is attached at Asn121. The short motif at 222-226 is the WSXWS motif element; it reads WSKWS. Residues Asn329, Asn346, Asn352, Asn442, and Asn456 are each glycosylated (N-linked (GlcNAc...) asparagine). A helical transmembrane segment spans residues 546-570; the sequence is WLIFFASLGSFLSILLVGVLGYLGL. At 571–662 the chain is on the cytoplasmic side; sequence NRAARHLCPP…EDGDRCKAKM (92 aa). Positions 577-585 match the Box 1 motif motif; that stretch reads LCPPLPTPC. Positions 626–637 are enriched in basic and acidic residues; the sequence is GERTEPLEKTEL. Residues 626–648 are disordered; the sequence is GERTEPLEKTELPEGAPELALDT.

It belongs to the type I cytokine receptor family. Type 2 subfamily. In terms of assembly, dimer or oligomer; disulfide-linked. Interacts with IL12RB2 to form the high affinity IL12 receptor. Heterodimer with IL23R; in presence of IL23. The heterodimer forms the IL23 receptor.

It is found in the membrane. Functionally, functions as an interleukin receptor which binds interleukin-12 with low affinity and is involved in IL12 transduction. Associated with IL12RB2 it forms a functional, high affinity receptor for IL12. Also associates with IL23R to form the interleukin-23 receptor which functions in IL23 signal transduction probably through activation of the Jak-Stat signaling cascade. In Homo sapiens (Human), this protein is Interleukin-12 receptor subunit beta-1 (IL12RB1).